The chain runs to 358 residues: 3-isopropylmalate dehydrogenase (358 aa).

79-92 (GPKWEHLPPDEQPE) serves as a coordination point for NAD(+). 4 residues coordinate substrate: Arg-100, Arg-110, Arg-139, and Asp-227. Positions 227, 251, and 255 each coordinate Mg(2+). Residue 285–297 (GSAPDIAGKGVAN) participates in NAD(+) binding.

This sequence belongs to the isocitrate and isopropylmalate dehydrogenases family. LeuB type 1 subfamily. Homodimer. Mg(2+) serves as cofactor. It depends on Mn(2+) as a cofactor.

Its subcellular location is the cytoplasm. It carries out the reaction (2R,3S)-3-isopropylmalate + NAD(+) = 4-methyl-2-oxopentanoate + CO2 + NADH. It functions in the pathway amino-acid biosynthesis; L-leucine biosynthesis; L-leucine from 3-methyl-2-oxobutanoate: step 3/4. Functionally, catalyzes the oxidation of 3-carboxy-2-hydroxy-4-methylpentanoate (3-isopropylmalate) to 3-carboxy-4-methyl-2-oxopentanoate. The product decarboxylates to 4-methyl-2 oxopentanoate. The chain is 3-isopropylmalate dehydrogenase from Pseudoalteromonas translucida (strain TAC 125).